The following is a 502-amino-acid chain: UDP-N-acetylmuramoylalanine--D-glutamate ligase (502 aa).

ATP is bound at residue 136 to 142 (GTNGKTT).

This sequence belongs to the MurCDEF family.

It localises to the cytoplasm. It carries out the reaction UDP-N-acetyl-alpha-D-muramoyl-L-alanine + D-glutamate + ATP = UDP-N-acetyl-alpha-D-muramoyl-L-alanyl-D-glutamate + ADP + phosphate + H(+). Its pathway is cell wall biogenesis; peptidoglycan biosynthesis. In terms of biological role, cell wall formation. Catalyzes the addition of glutamate to the nucleotide precursor UDP-N-acetylmuramoyl-L-alanine (UMA). This chain is UDP-N-acetylmuramoylalanine--D-glutamate ligase, found in Corynebacterium jeikeium (strain K411).